Reading from the N-terminus, the 412-residue chain is Putative competence-damage inducible protein (412 aa).

It belongs to the CinA family.

The protein is Putative competence-damage inducible protein of Bacillus thuringiensis (strain Al Hakam).